Consider the following 169-residue polypeptide: Transcription antitermination protein NusB (169 aa).

A disordered region spans residues R147 to E169.

Belongs to the NusB family.

Its function is as follows. Involved in transcription antitermination. Required for transcription of ribosomal RNA (rRNA) genes. Binds specifically to the boxA antiterminator sequence of the ribosomal RNA (rrn) operons. The polypeptide is Transcription antitermination protein NusB (Chlorobium chlorochromatii (strain CaD3)).